The primary structure comprises 72 residues: Translation initiation factor IF-1 (72 aa).

The 72-residue stretch at 1-72 (MAKSDVIEVD…DKGRITYRYK (72 aa)) folds into the S1-like domain.

It belongs to the IF-1 family. Component of the 30S ribosomal translation pre-initiation complex which assembles on the 30S ribosome in the order IF-2 and IF-3, IF-1 and N-formylmethionyl-tRNA(fMet); mRNA recruitment can occur at any time during PIC assembly.

Its subcellular location is the cytoplasm. Its function is as follows. One of the essential components for the initiation of protein synthesis. Stabilizes the binding of IF-2 and IF-3 on the 30S subunit to which N-formylmethionyl-tRNA(fMet) subsequently binds. Helps modulate mRNA selection, yielding the 30S pre-initiation complex (PIC). Upon addition of the 50S ribosomal subunit IF-1, IF-2 and IF-3 are released leaving the mature 70S translation initiation complex. The polypeptide is Translation initiation factor IF-1 (Sulfurimonas denitrificans (strain ATCC 33889 / DSM 1251) (Thiomicrospira denitrificans (strain ATCC 33889 / DSM 1251))).